The chain runs to 136 residues: Small ribosomal subunit protein eS12 (136 aa).

The protein belongs to the eukaryotic ribosomal protein eS12 family.

The chain is Small ribosomal subunit protein eS12 (rps12) from Dictyostelium discoideum (Social amoeba).